We begin with the raw amino-acid sequence, 444 residues long: ATP-dependent protease ATPase subunit HslU (444 aa).

ATP-binding positions include isoleucine 18, 60–65 (GVGKTE), aspartate 256, glutamate 322, and arginine 394.

It belongs to the ClpX chaperone family. HslU subfamily. A double ring-shaped homohexamer of HslV is capped on each side by a ring-shaped HslU homohexamer. The assembly of the HslU/HslV complex is dependent on binding of ATP.

The protein localises to the cytoplasm. In terms of biological role, ATPase subunit of a proteasome-like degradation complex; this subunit has chaperone activity. The binding of ATP and its subsequent hydrolysis by HslU are essential for unfolding of protein substrates subsequently hydrolyzed by HslV. HslU recognizes the N-terminal part of its protein substrates and unfolds these before they are guided to HslV for hydrolysis. This Klebsiella pneumoniae subsp. pneumoniae (strain ATCC 700721 / MGH 78578) protein is ATP-dependent protease ATPase subunit HslU.